The primary structure comprises 128 residues: Profilin (128 aa).

This sequence belongs to the profilin family.

More likely to influence phosphoinositide metabolism than actin assembly. The polypeptide is Profilin (Homo sapiens (Human)).